The following is a 706-amino-acid chain: Ribosomal RNA large subunit methyltransferase K/L (706 aa).

Positions 43–154 (LMYQSLLWSR…RDMASVALDL (112 aa)) constitute a THUMP domain.

This sequence belongs to the methyltransferase superfamily. RlmKL family.

The protein resides in the cytoplasm. The catalysed reaction is guanosine(2445) in 23S rRNA + S-adenosyl-L-methionine = N(2)-methylguanosine(2445) in 23S rRNA + S-adenosyl-L-homocysteine + H(+). The enzyme catalyses guanosine(2069) in 23S rRNA + S-adenosyl-L-methionine = N(2)-methylguanosine(2069) in 23S rRNA + S-adenosyl-L-homocysteine + H(+). Its function is as follows. Specifically methylates the guanine in position 2445 (m2G2445) and the guanine in position 2069 (m7G2069) of 23S rRNA. This is Ribosomal RNA large subunit methyltransferase K/L from Yersinia enterocolitica serotype O:8 / biotype 1B (strain NCTC 13174 / 8081).